The primary structure comprises 175 residues: Large ribosomal subunit protein uL10 (175 aa).

The protein belongs to the universal ribosomal protein uL10 family. In terms of assembly, part of the ribosomal stalk of the 50S ribosomal subunit. The N-terminus interacts with L11 and the large rRNA to form the base of the stalk. The C-terminus forms an elongated spine to which L12 dimers bind in a sequential fashion forming a multimeric L10(L12)X complex.

Forms part of the ribosomal stalk, playing a central role in the interaction of the ribosome with GTP-bound translation factors. The polypeptide is Large ribosomal subunit protein uL10 (Psychrobacter sp. (strain PRwf-1)).